The chain runs to 122 residues: Zein-alpha B49 (122 aa).

The protein belongs to the zein family.

Functionally, zeins are major seed storage proteins. This chain is Zein-alpha B49, found in Zea mays (Maize).